A 113-amino-acid polypeptide reads, in one-letter code: uncharacterized protein (113 aa).

The helical transmembrane segment at 7-29 threads the bilayer; that stretch reads FFILIVLLFTVFSLKEFIPNTFC.

Its subcellular location is the membrane. This is an uncharacterized protein from Aquifex aeolicus (strain VF5).